We begin with the raw amino-acid sequence, 617 residues long: Neurosecretory protein VGF (617 aa).

The first 23 residues, 1–23 (MKTFTLPASVLFCFLLLIQGLGA), serve as a signal peptide directing secretion. Disordered stretches follow at residues 29-75 (PDVF…GELF), 93-204 (RPAS…ESPG), and 239-262 (SESA…THLG). Positions 48–64 (AVSRPKDDGVPEVRAAR) are enriched in basic and acidic residues. Residues 149–160 (DPEEDDRSEELE) are compositionally biased toward acidic residues. Positions 182-197 (ETAAAETETRTHTLTR) are enriched in low complexity. At glutamine 313 the chain carries Pyrrolidone carboxylic acid. Basic and acidic residues predominate over residues 345-364 (RQRDLGGRELQETQQERENE). The segment at 345 to 599 (RQRDLGGREL…EEADAEERRL (255 aa)) is disordered. Residues 378-397 (EDDVGEEDEEAAEAEAEAEE) show a composition bias toward acidic residues. A compositionally biased stretch (basic and acidic residues) spans 418-436 (AEDKRSQEEAPGHRRKDAE). The residue at position 423 (serine 423) is a Phosphoserine. A compositionally biased stretch (acidic residues) spans 437 to 452 (GAEEGGEEDDDDEEMD). A compositionally biased stretch (pro residues) spans 491–501 (PPEPVPPPRAA). Residues 577–599 (HHPDLEAQARRAQEEADAEERRL) show a composition bias toward basic and acidic residues.

In terms of assembly, interacts with HSPA8 on cell membrane. Interacts with C3AR1. Interacts with C1QBP.

It is found in the secreted. The protein resides in the cytoplasmic vesicle. The protein localises to the secretory vesicle. Its function is as follows. Secreted polyprotein that is packaged and proteolytically processed by prohormone convertases PCSK1 and PCSK2 in a cell-type-specific manner. VGF and peptides derived from its processing play many roles in neurogenesis and neuroplasticity associated with learning, memory, depression and chronic pain. Plays a role in the control of body fluid homeostasis by regulating vasopressin release. Suppresses presynaptic glutamatergic neurons connected to vasopressin neurons. Functionally, plays a role in the control of body fluid homeostasis by regulating vasopressin release. Activates GABAergic interneurons which are inhibitory neurons of the nervous system and thereby suppresses presynaptic glutamatergic neurons. Also stimulates feeding behavior in an orexin-dependent manner in the hypothalamus. Functions as a positive regulator for the activation of orexin neurons resulting in elevated gastric acid secretion and gastric emptying. In terms of biological role, secreted multifunctional peptide that interacts with different receptors and thereby plays multiple physiological roles including modulation of energy expenditure, pain, response to stress, gastric regulation as well as lipolysis. Activates the G-protein-coupled receptor C3AR1 via a folding-upon-binding mechanism leading to enhanced lipolysis in adipocytes. Interacts with gC1qR receptor in macrophages and microglia causing increased levels of intracellular calcium and hypersensitivity. Its function is as follows. Plays a role in the regulation of memory formation and depression-related behaviors potentially by influencing synaptic plasticity and neurogenesis. Induces acute and transient activation of the NTRK2/TRKB receptor and subsequent CREB phosphorylation. Also induces insulin secretion in insulinoma cells by increasing intracellular calcium mobilization. The chain is Neurosecretory protein VGF from Mus musculus (Mouse).